Reading from the N-terminus, the 489-residue chain is MAVMGIQMVVTLLVASLMQRVSPHYSFGRWLLCNGSLFRYKHPTEEELRTLAGKQKPKAKKERRTNGVAEEKPLTVPKDIDLRLDTQPINTMDALVLRYFLEYQWFIDFALYSTIIYLFTEAYYCVVDAQNEINIGVLWCLMSIIFSIKVLFTVMKHYFRSEEGGERSVCMTFAFFFLLIAMIVTIVRDEYLEFGLEPGLASVCHNLENFLAQQGWQWSMPFVKLAFKIALVALCAFLGGCLTFPGLRLAQTHLDALKMAADRPMLQLLLHMSFLPPVIVVVLWIRPITRDFLLNAPMGKESVELMSNSAYNTFRLWIIVLLCLLRFCLTRFHLQAYLCLADRWVEQMKREAGRISMLEIQRKISRIFCYLTVVALQYLAPVILTFHCVFMLKSLGDYSWGLYPEPPGFSPVVDSSPVQSHSPTSEEEEDTEDVQAAVEQIMGVLTSLRGLFTPLFFRGIFSFLTWWVSVCQIITSLFGLYFHQYLGAS.

Positions 1–23 are cleaved as a signal peptide; that stretch reads MAVMGIQMVVTLLVASLMQRVSP. Over 24–98 the chain is Extracellular; the sequence is HYSFGRWLLC…INTMDALVLR (75 aa). N-linked (GlcNAc...) asparagine glycosylation occurs at N34. Residues 99 to 119 form a helical membrane-spanning segment; the sequence is YFLEYQWFIDFALYSTIIYLF. The Cytoplasmic segment spans residues 120–134; the sequence is TEAYYCVVDAQNEIN. The helical transmembrane segment at 135-155 threads the bilayer; the sequence is IGVLWCLMSIIFSIKVLFTVM. The Extracellular segment spans residues 156-166; the sequence is KHYFRSEEGGE. A helical transmembrane segment spans residues 167–187; that stretch reads RSVCMTFAFFFLLIAMIVTIV. The Cytoplasmic portion of the chain corresponds to 188–224; sequence RDEYLEFGLEPGLASVCHNLENFLAQQGWQWSMPFVK. A helical transmembrane segment spans residues 225-245; it reads LAFKIALVALCAFLGGCLTFP. The Extracellular segment spans residues 246–264; it reads GLRLAQTHLDALKMAADRP. A helical transmembrane segment spans residues 265–285; the sequence is MLQLLLHMSFLPPVIVVVLWI. Topologically, residues 286–304 are cytoplasmic; it reads RPITRDFLLNAPMGKESVE. A helical membrane pass occupies residues 305 to 325; that stretch reads LMSNSAYNTFRLWIIVLLCLL. Residues 326-370 lie on the Extracellular side of the membrane; that stretch reads RFCLTRFHLQAYLCLADRWVEQMKREAGRISMLEIQRKISRIFCY. The helical transmembrane segment at 371 to 391 threads the bilayer; the sequence is LTVVALQYLAPVILTFHCVFM. Over 392–459 the chain is Cytoplasmic; the sequence is LKSLGDYSWG…GLFTPLFFRG (68 aa). The tract at residues 413–432 is disordered; it reads VDSSPVQSHSPTSEEEEDTE. A helical transmembrane segment spans residues 460-480; that stretch reads IFSFLTWWVSVCQIITSLFGL. The Extracellular segment spans residues 481-489; it reads YFHQYLGAS.

Belongs to the TMEM161 family.

It is found in the membrane. May play a role in protection against oxidative stress. In Xenopus laevis (African clawed frog), this protein is Transmembrane protein 161A (tmem161a).